We begin with the raw amino-acid sequence, 494 residues long: 4-trimethylaminobutyraldehyde dehydrogenase (494 aa).

N-acetylserine is present on Ser-2. Lys-30 is modified (N6-acetyllysine; alternate). Lys-30 bears the N6-succinyllysine; alternate mark. N6-succinyllysine is present on Lys-59. NAD(+)-binding positions include Lys-180 and 232 to 236; that span reads GSVPT. Catalysis depends on Glu-254, which acts as the Proton acceptor. Residue Cys-288 is the Nucleophile of the active site. N6-acetyllysine is present on residues Lys-298 and Lys-344. Glu-391 provides a ligand contact to NAD(+).

The protein belongs to the aldehyde dehydrogenase family. Homotetramer.

It localises to the cytoplasm. The protein resides in the cytosol. The enzyme catalyses 4-(trimethylamino)butanal + NAD(+) + H2O = 4-(trimethylamino)butanoate + NADH + 2 H(+). It carries out the reaction an aldehyde + NAD(+) + H2O = a carboxylate + NADH + 2 H(+). The catalysed reaction is 4-aminobutanal + NAD(+) + H2O = 4-aminobutanoate + NADH + 2 H(+). It catalyses the reaction formaldehyde + NAD(+) + H2O = formate + NADH + 2 H(+). The enzyme catalyses acetaldehyde + NAD(+) + H2O = acetate + NADH + 2 H(+). It carries out the reaction imidazole-4-acetaldehyde + NAD(+) + H2O = imidazole-4-acetate + NADH + 2 H(+). The catalysed reaction is acrolein + NAD(+) + H2O = acrylate + NADH + 2 H(+). It catalyses the reaction (5-hydroxyindol-3-yl)acetaldehyde + NAD(+) + H2O = (5-hydroxyindol-3-yl)acetate + NADH + 2 H(+). The enzyme catalyses 3,4-dihydroxyphenylacetaldehyde + NAD(+) + H2O = 3,4-dihydroxyphenylacetate + NADH + 2 H(+). It carries out the reaction spermine monoaldehyde + NAD(+) + H2O = N-(2-carboxyethyl)spermidine + NADH + 2 H(+). The catalysed reaction is propanal + NAD(+) + H2O = propanoate + NADH + 2 H(+). It catalyses the reaction butanal + NAD(+) + H2O = butanoate + NADH + 2 H(+). The enzyme catalyses pentanal + NAD(+) + H2O = pentanoate + NADH + 2 H(+). It carries out the reaction hexanal + NAD(+) + H2O = hexanoate + NADH + 2 H(+). The protein operates within amine and polyamine biosynthesis; carnitine biosynthesis. Converts gamma-trimethylaminobutyraldehyde into gamma-butyrobetaine with high efficiency (in vitro). Can catalyze the irreversible oxidation of a broad range of aldehydes to the corresponding acids in an NAD-dependent reaction, but with low efficiency. Catalyzes the oxidation of aldehydes arising from biogenic amines and polyamines. The protein is 4-trimethylaminobutyraldehyde dehydrogenase (ALDH9A1) of Bos taurus (Bovine).